A 239-amino-acid polypeptide reads, in one-letter code: Apoptosis regulator Bcl-2 (239 aa).

The BH4 signature appears at 10 to 30 (DNREIVMKYIHYKLSQRGYEW). The interval 39-85 (PPGAAPAPGIFSSQPGHTPHPAASRDPVARTSPLQTPAAPGAAAGPA) is disordered. Residue Thr-69 is modified to Phosphothreonine; by MAPK8. Ser-70 bears the Phosphoserine; by MAPK8 and PKC mark. Residues 75 to 85 (PAAPGAAAGPA) show a composition bias toward low complexity. At Ser-87 the chain carries Phosphoserine; by MAPK8. A required for interaction with SEPTIN4 isoform ARTS. Required XIAP-mediated ubiquitination and apoptosis region spans residues 92–107 (VVHLTLRQAGDDFSRR). The BH3 signature appears at 93–107 (VHLTLRQAGDDFSRR). The BH1 motif lies at 136-155 (ELFRDGVNWGRIVAFFEFGG). A BH2 motif is present at residues 187–202 (TWIQDNGGWDAFVELY). A helical membrane pass occupies residues 212-233 (FSWLSLKTLLSLALVGACITLG).

Belongs to the Bcl-2 family. Forms homodimers, and heterodimers with BAX, BAD, BAK and Bcl-X(L). Heterodimerization with BAX requires intact BH1 and BH2 motifs, and is necessary for anti-apoptotic activity. Part of a complex composed of SEPTIN4 isoform ARTS, XIAP and BCL2, within the complex interacts (via BH3 domain) with SEPTIN4 isoform ARTS and XIAP, SEPTIN4 isoform ARTS acts as a scaffold protein and stabilizes the complex. Component of the complex, at least composed of LRPPRC, BECN1 and BCL2; the interactions prevent BECN1 from forming an autophagy-inducing complex with PIK3C3. Interacts with EI24. Also interacts with APAF1, BBC3, BCL2L1, BNIPL, MRPL41 and TP53BP2. Binding to FKBP8 seems to target BCL2 to the mitochondria and probably interferes with the binding of BCL2 to its targets. Interacts with BAG1 in an ATP-dependent manner. Interacts with RAF1 (the 'Ser-338' and 'Ser-339' phosphorylated form). Interacts (via the BH4 domain) with EGLN3; the interaction prevents the formation of the BAX-BCL2 complex and inhibits the anti-apoptotic activity of BCL2. Interacts with G0S2; this interaction also prevents the formation of the anti-apoptotic BAX-BCL2 complex. Interacts with RTL10/BOP. Interacts with the SCF(FBXO10) complex. Interacts (via the loop between motifs BH4 and BH3) with NLRP1 (via LRR repeats), but not with NLRP2, NLRP3, NLRP4, PYCARD, nor MEFV. Interacts with GIMAP3/IAN4, GIMAP4/IAN1 and GIMAP5/IAN5. Interacts with BCAP31. Interacts with IRF3; the interaction is inhibited by Sendai virus infection. Interacts with BECN1; thereby inhibiting autophagy in non-starvation conditions. Interacts with AMBRA1; thereby inhibiting autophagy. As to quaternary structure, (Microbial infection) Interacts with Toxoplasma gondii ROP17; the interaction probably promotes BCL2 phosphorylation and degradation. In terms of processing, phosphorylation/dephosphorylation on Ser-70 regulates anti-apoptotic activity. Growth factor-stimulated phosphorylation on Ser-70 by PKC is required for the anti-apoptosis activity and occurs during the G2/M phase of the cell cycle. In the absence of growth factors, BCL2 appears to be phosphorylated by other protein kinases such as ERKs and stress-activated kinases. Phosphorylated by MAPK8/JNK1 at Thr-69, Ser-70 and Ser-87, which stimulates starvation-induced autophagy. Dephosphorylated by protein phosphatase 2A (PP2A). Post-translationally, proteolytically cleaved by caspases during apoptosis. The cleaved protein, lacking the BH4 motif, has pro-apoptotic activity, causes the release of cytochrome c into the cytosol promoting further caspase activity. Monoubiquitinated by PRKN, leading to an increase in its stability. Ubiquitinated by SCF(FBXO10), leading to its degradation by the proteasome. Ubiquitinated by XIAP, leading to its degradation by the proteasome. Expressed in a variety of tissues.

It localises to the mitochondrion outer membrane. Its subcellular location is the nucleus membrane. It is found in the endoplasmic reticulum membrane. The protein resides in the cytoplasm. Functionally, suppresses apoptosis in a variety of cell systems including factor-dependent lymphohematopoietic and neural cells. Regulates cell death by controlling the mitochondrial membrane permeability. Appears to function in a feedback loop system with caspases. Inhibits caspase activity either by preventing the release of cytochrome c from the mitochondria and/or by binding to the apoptosis-activating factor (APAF-1). Also acts as an inhibitor of autophagy: interacts with BECN1 and AMBRA1 during non-starvation conditions and inhibits their autophagy function. May attenuate inflammation by impairing NLRP1-inflammasome activation, hence CASP1 activation and IL1B release. In Homo sapiens (Human), this protein is Apoptosis regulator Bcl-2 (BCL2).